The sequence spans 238 residues: Cell division protein A (238 aa).

As to quaternary structure, interacts with CdvB.

It is found in the cytoplasm. Its subcellular location is the nucleoid. The protein resides in the cell membrane. In terms of biological role, part of a cell division machinery. The CdvA, CdvB and CdvC proteins polymerize between segregating nucleoids and persist throughout cell division, forming a successively smaller structure during constriction. CdvA is a membrane interacting protein that recruits ESCRT-III homologs to the membrane. This is Cell division protein A from Sulfolobus acidocaldarius (strain ATCC 33909 / DSM 639 / JCM 8929 / NBRC 15157 / NCIMB 11770).